We begin with the raw amino-acid sequence, 563 residues long: Arginine--tRNA ligase (563 aa).

Positions 108–118 (PNVAKEMHVGH) match the 'HIGH' region motif.

The protein belongs to the class-I aminoacyl-tRNA synthetase family. As to quaternary structure, monomer.

It localises to the cytoplasm. The catalysed reaction is tRNA(Arg) + L-arginine + ATP = L-arginyl-tRNA(Arg) + AMP + diphosphate. The polypeptide is Arginine--tRNA ligase (argS) (Pasteurella multocida (strain Pm70)).